We begin with the raw amino-acid sequence, 187 residues long: Elongation factor P (187 aa).

It belongs to the elongation factor P family.

It localises to the cytoplasm. It participates in protein biosynthesis; polypeptide chain elongation. Involved in peptide bond synthesis. Stimulates efficient translation and peptide-bond synthesis on native or reconstituted 70S ribosomes in vitro. Probably functions indirectly by altering the affinity of the ribosome for aminoacyl-tRNA, thus increasing their reactivity as acceptors for peptidyl transferase. The chain is Elongation factor P from Acidothermus cellulolyticus (strain ATCC 43068 / DSM 8971 / 11B).